The following is a 533-amino-acid chain: Quinate permease (533 aa).

Topologically, residues 1 to 21 are cytoplasmic; sequence MSILALVEDRPTPREVYNWRV. Residues 22-42 form a helical membrane-spanning segment; the sequence is YLLAAVASFTSCMIGYDSAFI. The Extracellular segment spans residues 43-67; sequence GTTLSLQSFQNEFNWESLNTDLISA. Residues 68-88 form a helical membrane-spanning segment; sequence NIVSLYQAGAFFGALFAYPIG. Residues 89–94 lie on the Cytoplasmic side of the membrane; the sequence is HFWGRR. A helical transmembrane segment spans residues 95–115; it reads WGLMFSALIFFLGAGMMLGAN. Topologically, residues 116-127 are extracellular; that stretch reads GDRGLGLIYGGR. Residues 128–148 traverse the membrane as a helical segment; it reads VLAGIGVGAGSNICPIYISEM. Residues 149–156 lie on the Cytoplasmic side of the membrane; sequence APPAIRGR. Residues 157-177 traverse the membrane as a helical segment; that stretch reads LVGVYELGWQIGGVVGFWINY. Residues 178-191 lie on the Extracellular side of the membrane; it reads GVDETLAPSHKQWI. Residues 192–212 traverse the membrane as a helical segment; it reads IPFAVQLIPAGLLIIGALLIR. At 213-282 the chain is on the cytoplasmic side; it reads ESPRWLFLRG…AWTNKRILYR (70 aa). The helical transmembrane segment at 283–303 threads the bilayer; it reads LFLGSMLFLWQNGSGINAINY. Over 304–324 the chain is Extracellular; it reads YSPRVFKSIGVSGGNTSLLTT. A helical membrane pass occupies residues 325–346; sequence GIFGVVKAVITFVWLLYLIDHF. The Cytoplasmic segment spans residues 347 to 349; that stretch reads GRR. The chain crosses the membrane as a helical span at residues 350–370; the sequence is NLLLVGAAGGSVCLWIVGGYI. The Extracellular segment spans residues 371–385; the sequence is KIAKPENNPEGTQLD. A helical membrane pass occupies residues 386–406; that stretch reads SGGIAAIFFFYLWTAFYTPSW. The Cytoplasmic portion of the chain corresponds to 407–431; the sequence is NGTPWVINSEMFDPTVRSLAQACAA. The helical transmembrane segment at 432-452 threads the bilayer; sequence ASNWLWNFLISRFTPQMFTSM. Residues 453–454 are Extracellular-facing; the sequence is GY. The helical transmembrane segment at 455–475 threads the bilayer; that stretch reads GVYFFFASLMILSIVFVFFLI. The Cytoplasmic portion of the chain corresponds to 476–533; the sequence is PETKGVPLESMETLFDKKPVWHAHSQLIRELRENEEAFRADMGASGKGGVTKEYVEEA.

The protein belongs to the major facilitator superfamily. Sugar transporter (TC 2.A.1.1) family. Interacts with creB. In terms of processing, ubiquitinated. Deubiquitinated by creB, probably to control its activity or amount.

The protein resides in the cell membrane. In terms of biological role, integral membrane transporter that imports quinic acid to be catabolized as a carbon source. This is Quinate permease (qutD) from Emericella nidulans (strain FGSC A4 / ATCC 38163 / CBS 112.46 / NRRL 194 / M139) (Aspergillus nidulans).